The chain runs to 30 residues: Dermaseptin-3.1TR (30 aa).

Expressed by the skin glands.

It is found in the secreted. Its function is as follows. Has antimicrobial activity. This is Dermaseptin-3.1TR from Phyllomedusa trinitatis (Trinidad leaf frog).